The primary structure comprises 382 residues: Alanine racemase 1 (382 aa).

The active-site Proton acceptor; specific for D-alanine is K39. Position 39 is an N6-(pyridoxal phosphate)lysine (K39). Substrate is bound at residue R138. Catalysis depends on Y265, which acts as the Proton acceptor; specific for L-alanine. A substrate-binding site is contributed by M312.

It belongs to the alanine racemase family. Pyridoxal 5'-phosphate serves as cofactor.

The enzyme catalyses L-alanine = D-alanine. It functions in the pathway amino-acid biosynthesis; D-alanine biosynthesis; D-alanine from L-alanine: step 1/1. Functionally, catalyzes the interconversion of L-alanine and D-alanine. May also act on other amino acids. In Staphylococcus aureus (strain N315), this protein is Alanine racemase 1 (alr1).